Here is a 347-residue protein sequence, read N- to C-terminus: D-alanine--D-alanine ligase (347 aa).

The ATP-grasp domain occupies 131–333 (KRVLESAGIA…YPELIERLVD (203 aa)). Residue 161–216 (EEKLAYPVFTKPSNMGSSVGISKSENQEELRPALELAFRYDSRVLVEQGVNAREIE) coordinates ATP. Residues D287, E300, and N302 each coordinate Mg(2+).

It belongs to the D-alanine--D-alanine ligase family. It depends on Mg(2+) as a cofactor. The cofactor is Mn(2+).

The protein resides in the cytoplasm. It catalyses the reaction 2 D-alanine + ATP = D-alanyl-D-alanine + ADP + phosphate + H(+). The protein operates within cell wall biogenesis; peptidoglycan biosynthesis. Its function is as follows. Cell wall formation. The sequence is that of D-alanine--D-alanine ligase from Streptococcus pneumoniae (strain Taiwan19F-14).